A 114-amino-acid chain; its full sequence is Cytochrome c2 (114 aa).

Glutamine 1 bears the Pyrrolidone carboxylic acid mark. Positions 13, 16, 17, and 93 each coordinate heme c.

This sequence belongs to the cytochrome c family. Post-translationally, binds 1 heme c group covalently per subunit.

It is found in the periplasm. Its function is as follows. Cytochrome c2 is found mainly in purple, non-sulfur, photosynthetic bacteria where it functions as the electron donor to the oxidized bacteriochlorophyll in the photophosphorylation pathway. However, it may also have a role in the respiratory chain and is found in some non-photosynthetic bacteria. The sequence is that of Cytochrome c2 from Rhodopseudomonas palustris.